The primary structure comprises 357 residues: Heat-inducible transcription repressor HrcA (357 aa).

The protein belongs to the HrcA family.

Negative regulator of class I heat shock genes (grpE-dnaK-dnaJ and groELS operons). Prevents heat-shock induction of these operons. The sequence is that of Heat-inducible transcription repressor HrcA from Ureaplasma parvum serovar 3 (strain ATCC 27815 / 27 / NCTC 11736).